We begin with the raw amino-acid sequence, 251 residues long: Outer membrane protein assembly factor BamD (251 aa).

The N-terminal stretch at methionine 1–glycine 19 is a signal peptide. Cysteine 20 carries the N-palmitoyl cysteine lipid modification. Cysteine 20 carries S-diacylglycerol cysteine lipidation. 3 TPR repeats span residues isoleucine 33 to asparagine 66, proline 70 to asparagine 103, and alanine 166 to threonine 199.

It belongs to the BamD family. As to quaternary structure, part of the Bam complex.

It localises to the cell outer membrane. Part of the outer membrane protein assembly complex, which is involved in assembly and insertion of beta-barrel proteins into the outer membrane. The sequence is that of Outer membrane protein assembly factor BamD from Rickettsia prowazekii (strain Madrid E).